Here is a 334-residue protein sequence, read N- to C-terminus: D-alanine--D-alanine ligase (334 aa).

Residues 121-327 (KLWYDALDIP…FSEFLVQCVT (207 aa)) form the ATP-grasp domain. 151 to 206 (AFGHWGSIFVKAARQGSSVGCYKVTTEDQIAPAIEAAFGFSEQVLVEQAVKPRELE) is a binding site for ATP. 3 residues coordinate Mg(2+): Asp281, Glu294, and Asn296.

It belongs to the D-alanine--D-alanine ligase family. Mg(2+) is required as a cofactor. Requires Mn(2+) as cofactor.

It is found in the cytoplasm. It carries out the reaction 2 D-alanine + ATP = D-alanyl-D-alanine + ADP + phosphate + H(+). Its pathway is cell wall biogenesis; peptidoglycan biosynthesis. Cell wall formation. This is D-alanine--D-alanine ligase from Vibrio cholerae serotype O1 (strain ATCC 39315 / El Tor Inaba N16961).